We begin with the raw amino-acid sequence, 698 residues long: D-(-)-3-hydroxybutyrate oligomer hydrolase (698 aa).

A signal peptide spans 1–32; it reads MTTIRGGSRRASLPALALLGVLLGACHSDDNA. Ser310 functions as the Charge relay system in the catalytic mechanism.

The protein belongs to the D-(-)-3-hydroxybutyrate oligomer hydrolase family.

It is found in the secreted. It carries out the reaction (3R)-hydroxybutanoate dimer + H2O = 2 (R)-3-hydroxybutanoate + H(+). It functions in the pathway lipid metabolism; butanoate metabolism. Participates in the degradation of poly-3-hydroxybutyrate (PHB). It works downstream of poly(3-hydroxybutyrate) depolymerase, hydrolyzing D(-)-3-hydroxybutyrate oligomers of various length (3HB-oligomers) into 3HB-monomers. The polypeptide is D-(-)-3-hydroxybutyrate oligomer hydrolase (Burkholderia thailandensis (strain ATCC 700388 / DSM 13276 / CCUG 48851 / CIP 106301 / E264)).